Reading from the N-terminus, the 464-residue chain is MAFFLIFLSSFFGLCIFCTALLRWNQVKYNQKNLPPGTMGWPLFGETTEFLKLGPSFMKNQRARYGSFFKSHILGCPTIVSMDSELNRYILVNEAKGLVPGYPQSMIDILGKCNIAAVNGSAHKYMRGALLSLISPTMIRDQLLPKIDEFMRSHLTNWDNKVIDIQEKTNKMAFLSSLKQIAGIESTSLAQEFMSEFFNLVLGTLSLPINLPNTNYHRGFQARKIIVNLLRTLIEERRASKEIQHDMLGYLMNEEATRFKLTDDEMIDLIITILYSGYETVSTTSMMAVKYLHDHPKVLEELRKEHMAIREKKKPEDPIDYNDYRSMRFTRAVILETSRLATIVNGVLRKTTQDMEINGYIIPKGWRIYVYTRELNYDPRLYPDPYSFNPWRWMDKSLEHQNSFLVFGGGTRQCPGKELGVAEISTFLHYFVTKYRWEEIGGDKLMKFPRVEAPNGLRIRVSAH.

Residues 2–22 (AFFLIFLSSFFGLCIFCTALL) traverse the membrane as a helical segment. A heme-binding site is contributed by Cys414.

The protein belongs to the cytochrome P450 family. The cofactor is heme. Expressed in sub-meristematic regions of shoot and root apexes, in zones undergoing lateral root formation, in fruits, and in all flower parts, with a high expression in young flower buds and at the joint in the pedicel.

It is found in the membrane. It catalyses the reaction 6-deoxocastasterone + reduced [NADPH--hemoprotein reductase] + O2 = 6alpha-hydroxycastasterone + oxidized [NADPH--hemoprotein reductase] + H2O + H(+). The enzyme catalyses 6alpha-hydroxycastasterone + reduced [NADPH--hemoprotein reductase] + O2 = castasterone + oxidized [NADPH--hemoprotein reductase] + 2 H2O + H(+). It carries out the reaction 6-deoxocastasterone + 2 reduced [NADPH--hemoprotein reductase] + 2 O2 = castasterone + 2 oxidized [NADPH--hemoprotein reductase] + 3 H2O + 2 H(+). It participates in plant hormone biosynthesis; brassinosteroid biosynthesis. Its function is as follows. Catalyzes the C6-oxidation step in brassinosteroids biosynthesis. Converts 6-deoxocastasterone (6-deoxoCS) to castasterone (CS). May also convert 6-deoxoteasterone (6-deoxoTE) to teasterone (TE), 3-dehydro-6-deoxoteasterone (6-deoxo3DT, 6-deoxo3DHT) to 3-dehydroteasterone (3DT, 3-DHT), and 6-deoxotyphasterol (6-deoxoTY) to typhasterol (TY), but not castasterone (CS) to brassinolide (BL). This is Cytochrome P450 85A1 from Solanum lycopersicum (Tomato).